A 153-amino-acid chain; its full sequence is 6,7-dimethyl-8-ribityllumazine synthase (153 aa).

Residues F22, 56–58 (AFE), and 80–82 (TVI) contribute to the 5-amino-6-(D-ribitylamino)uracil site. A (2S)-2-hydroxy-3-oxobutyl phosphate-binding site is contributed by 85 to 86 (ST). The active-site Proton donor is H88. F113 is a binding site for 5-amino-6-(D-ribitylamino)uracil. R127 contributes to the (2S)-2-hydroxy-3-oxobutyl phosphate binding site.

Belongs to the DMRL synthase family. As to quaternary structure, forms an icosahedral capsid composed of 60 subunits, arranged as a dodecamer of pentamers.

It catalyses the reaction (2S)-2-hydroxy-3-oxobutyl phosphate + 5-amino-6-(D-ribitylamino)uracil = 6,7-dimethyl-8-(1-D-ribityl)lumazine + phosphate + 2 H2O + H(+). It participates in cofactor biosynthesis; riboflavin biosynthesis; riboflavin from 2-hydroxy-3-oxobutyl phosphate and 5-amino-6-(D-ribitylamino)uracil: step 1/2. Its function is as follows. Catalyzes the formation of 6,7-dimethyl-8-ribityllumazine by condensation of 5-amino-6-(D-ribitylamino)uracil with 3,4-dihydroxy-2-butanone 4-phosphate. This is the penultimate step in the biosynthesis of riboflavin. This Actinobacillus pleuropneumoniae serotype 3 (strain JL03) protein is 6,7-dimethyl-8-ribityllumazine synthase.